A 219-amino-acid polypeptide reads, in one-letter code: PKHD-type hydroxylase SYNPCC7002_A2658 (219 aa).

One can recognise a Fe2OG dioxygenase domain in the interval 78 to 172; that stretch reads TVHTLLFSRY…RLVAVGWVQS (95 aa). Residues His96, Asp98, and His153 each contribute to the Fe cation site. A 2-oxoglutarate-binding site is contributed by Arg163.

Requires Fe(2+) as cofactor. The cofactor is L-ascorbate.

The protein is PKHD-type hydroxylase SYNPCC7002_A2658 of Picosynechococcus sp. (strain ATCC 27264 / PCC 7002 / PR-6) (Agmenellum quadruplicatum).